The following is a 408-amino-acid chain: MSLSVTRENFDEWMVPVYVPAPFIPVRGEGSRLWDQQGKEYIDFAGGIAVNALGHAHPALREALNEQANRFWHIGNGYTNEPALRLAKKLIDATFAERVFFCNSGAEANEAALKLARKYAHDRVGNHKSGIVAFKNAFHGRTLFTVSAGGQPTYSQDFAPLPPDIRHAAYNDLNSASALIDDNTCAVIVEPVQGEGGVIPATKAFLQGLRELCDRHQALLIFDEVQTGVGRTGELYAYMHYGVTPDILTTAKALGGGFPIGAMLTTQDYASVMTPGTHGTTYGGNPLATAVAGKVLDIINTPEMQNGVRQRHDAFIERLNTLNVRFGMFSEIRGLGLLLGCVLQTEFAGKAKLIAQEAAKAGVMVLIAGGDVVRFAPALNVSDEEIATGLDRFALACERLQTGGVPCG.

An N6-(pyridoxal phosphate)lysine modification is found at Lys252.

Belongs to the class-III pyridoxal-phosphate-dependent aminotransferase family. AstC subfamily. Pyridoxal 5'-phosphate is required as a cofactor.

It carries out the reaction N(2)-succinyl-L-ornithine + 2-oxoglutarate = N-succinyl-L-glutamate 5-semialdehyde + L-glutamate. It participates in amino-acid degradation; L-arginine degradation via AST pathway; L-glutamate and succinate from L-arginine: step 3/5. Its function is as follows. Catalyzes the transamination of N(2)-succinylornithine and alpha-ketoglutarate into N(2)-succinylglutamate semialdehyde and glutamate. Can also act as an acetylornithine aminotransferase. This Salmonella typhimurium (strain LT2 / SGSC1412 / ATCC 700720) protein is Succinylornithine transaminase.